A 138-amino-acid polypeptide reads, in one-letter code: Protein FAM136A (138 aa).

Ala2 carries the post-translational modification N-acetylalanine. Phosphothreonine occurs at positions 124 and 126.

Belongs to the FAM136 family.

This is Protein FAM136A (FAM136A) from Homo sapiens (Human).